We begin with the raw amino-acid sequence, 381 residues long: Alcohol dehydrogenase-like 6 (381 aa).

Residues Cys-53, Ser-55, His-72, Cys-102, Cys-105, Cys-108, Cys-116, and Cys-179 each contribute to the Zn(2+) site. Residues Ser-55 and His-72 each coordinate an alcohol. Ser-55 provides a ligand contact to NAD(+). NAD(+) contacts are provided by residues 204 to 209 (GLGTVG), Asp-228, Lys-233, 297 to 299 (LGV), Phe-324, and Arg-374.

It belongs to the zinc-containing alcohol dehydrogenase family. Class-III subfamily. In terms of assembly, homodimer. The cofactor is Zn(2+).

It is found in the cytoplasm. The enzyme catalyses a primary alcohol + NAD(+) = an aldehyde + NADH + H(+). It carries out the reaction a secondary alcohol + NAD(+) = a ketone + NADH + H(+). The sequence is that of Alcohol dehydrogenase-like 6 from Arabidopsis thaliana (Mouse-ear cress).